Reading from the N-terminus, the 102-residue chain is NADH-quinone oxidoreductase subunit K 1 (102 aa).

The next 3 helical transmembrane spans lie at 5 to 25 (ISHY…GIFL), 31 to 51 (IIIL…MVAF), and 65 to 85 (LFIL…LVVF).

Belongs to the complex I subunit 4L family. NDH-1 is composed of 14 different subunits. Subunits NuoA, H, J, K, L, M, N constitute the membrane sector of the complex.

It localises to the cell inner membrane. It carries out the reaction a quinone + NADH + 5 H(+)(in) = a quinol + NAD(+) + 4 H(+)(out). Functionally, NDH-1 shuttles electrons from NADH, via FMN and iron-sulfur (Fe-S) centers, to quinones in the respiratory chain. The immediate electron acceptor for the enzyme in this species is believed to be ubiquinone. Couples the redox reaction to proton translocation (for every two electrons transferred, four hydrogen ions are translocated across the cytoplasmic membrane), and thus conserves the redox energy in a proton gradient. The protein is NADH-quinone oxidoreductase subunit K 1 of Rhizobium meliloti (strain 1021) (Ensifer meliloti).